The following is a 175-amino-acid chain: MDIFKEISDAIQEGLNSIFERWDLVLWQIAATVILIIVVRIFLWKPITRYLEQRQEALSKELHEAAHERERVAQIRYELQTEYEVMRKEARQMKDTLMSEAQLEKERIISDARNEAKRRIQQVDRDVQQELRLQSEKIRENIKNIAFDVAEKIVSHQVTDENIDEVIDEMLDEKL.

The helical transmembrane segment at 24-44 (LVLWQIAATVILIIVVRIFLW) threads the bilayer.

The protein belongs to the ATPase B chain family. As to quaternary structure, F-type ATPases have 2 components, F(1) - the catalytic core - and F(0) - the membrane proton channel. F(1) has five subunits: alpha(3), beta(3), gamma(1), delta(1), epsilon(1). F(0) has three main subunits: a(1), b(2) and c(10-14). The alpha and beta chains form an alternating ring which encloses part of the gamma chain. F(1) is attached to F(0) by a central stalk formed by the gamma and epsilon chains, while a peripheral stalk is formed by the delta and b chains.

The protein resides in the cell membrane. F(1)F(0) ATP synthase produces ATP from ADP in the presence of a proton or sodium gradient. F-type ATPases consist of two structural domains, F(1) containing the extramembraneous catalytic core and F(0) containing the membrane proton channel, linked together by a central stalk and a peripheral stalk. During catalysis, ATP synthesis in the catalytic domain of F(1) is coupled via a rotary mechanism of the central stalk subunits to proton translocation. In terms of biological role, component of the F(0) channel, it forms part of the peripheral stalk, linking F(1) to F(0). This chain is ATP synthase subunit b, found in Acholeplasma laidlawii (strain PG-8A).